Reading from the N-terminus, the 433-residue chain is Tol-Pal system protein TolB (433 aa).

The N-terminal stretch at 1–26 (MSLMTKLGFRALVASCLIAAGGAAHA) is a signal peptide.

The protein belongs to the TolB family. In terms of assembly, the Tol-Pal system is composed of five core proteins: the inner membrane proteins TolA, TolQ and TolR, the periplasmic protein TolB and the outer membrane protein Pal. They form a network linking the inner and outer membranes and the peptidoglycan layer.

It is found in the periplasm. In terms of biological role, part of the Tol-Pal system, which plays a role in outer membrane invagination during cell division and is important for maintaining outer membrane integrity. The chain is Tol-Pal system protein TolB from Burkholderia thailandensis (strain ATCC 700388 / DSM 13276 / CCUG 48851 / CIP 106301 / E264).